The primary structure comprises 124 residues: Ribonuclease pancreatic (124 aa).

The interval 1-24 (KESSAMKFQRQHMDSSGSPSTNAN) is disordered. Residues lysine 7 and arginine 10 each coordinate substrate. Residue histidine 12 is the Proton acceptor of the active site. Over residues 14–24 (DSSGSPSTNAN) the composition is skewed to polar residues. 4 disulfides stabilise this stretch: cysteine 26/cysteine 84, cysteine 40/cysteine 95, cysteine 58/cysteine 110, and cysteine 65/cysteine 72. Asparagine 34 carries an N-linked (GlcNAc...) asparagine glycan. Substrate is bound by residues 41–45 (KPVNT), lysine 66, and arginine 85. Catalysis depends on histidine 119, which acts as the Proton donor.

It belongs to the pancreatic ribonuclease family. As to quaternary structure, monomer. Interacts with and forms tight 1:1 complexes with RNH1. Dimerization of two such complexes may occur. Interaction with RNH1 inhibits this protein. In terms of tissue distribution, pancreas.

It is found in the secreted. The enzyme catalyses an [RNA] containing cytidine + H2O = an [RNA]-3'-cytidine-3'-phosphate + a 5'-hydroxy-ribonucleotide-3'-[RNA].. The catalysed reaction is an [RNA] containing uridine + H2O = an [RNA]-3'-uridine-3'-phosphate + a 5'-hydroxy-ribonucleotide-3'-[RNA].. Functionally, endonuclease that catalyzes the cleavage of RNA on the 3' side of pyrimidine nucleotides. Acts on single-stranded and double-stranded RNA. The protein is Ribonuclease pancreatic (RNASE1) of Chinchilla chinchilla (Short-tailed chinchilla).